The primary structure comprises 111 residues: UPF0145 protein Bphy_3680 (111 aa).

It belongs to the UPF0145 family.

In Paraburkholderia phymatum (strain DSM 17167 / CIP 108236 / LMG 21445 / STM815) (Burkholderia phymatum), this protein is UPF0145 protein Bphy_3680.